The chain runs to 860 residues: Protein argonaute-3 (860 aa).

The 120-residue stretch at 230-349 folds into the PAZ domain; it reads PVIQFMCEVL…LPLEVCNIVA (120 aa). One can recognise a Piwi domain in the interval 518-819; sequence LIIVILPGKT…VAFRARYHLV (302 aa). Residues 530–567 form an interaction with guide RNA region; the sequence is YAEVKRVGDTLLGMATQCVQVKNVVKTSPQTLSNLCLK. Residues D598, E638, and D670 each coordinate a divalent metal cation. The interval 758–805 is interaction with guide RNA; sequence QGTSRPSHYYVLWDDNCFTADEFQLLTYQLCHTYVRCTRSVSIPAPAY. H808 serves as a coordination point for a divalent metal cation.

It belongs to the argonaute family. Ago subfamily.

Its subcellular location is the cytoplasm. It is found in the P-body. The enzyme catalyses Endonucleolytic cleavage to 5'-phosphomonoester.. Functionally, required for RNA-mediated gene silencing (RNAi). Binds to short RNAs such as microRNAs (miRNAs) and represses the translation of mRNAs which are complementary to them. Possesses RNA slicer activity but only on select RNAs bearing 5'- and 3'-flanking sequences to the region of guide-target complementarity. The protein is Protein argonaute-3 (ago3) of Danio rerio (Zebrafish).